The sequence spans 211 residues: uncharacterized protein (211 aa).

The next 3 membrane-spanning stretches (helical) occupy residues Phe22–Val42, Ile111–Val131, and Gly133–Thr153.

It to E.coli YkgB. The protein to H.influenzae HI_0219.

The protein localises to the cell membrane. This is an uncharacterized protein from Mannheimia haemolytica (Pasteurella haemolytica).